The chain runs to 178 residues: UPF0302 protein BcerKBAB4_1445 (178 aa).

The protein belongs to the UPF0302 family.

The sequence is that of UPF0302 protein BcerKBAB4_1445 from Bacillus mycoides (strain KBAB4) (Bacillus weihenstephanensis).